We begin with the raw amino-acid sequence, 675 residues long: Protein C-mannosyl-transferase DPY19L1 (675 aa).

The interval Met1 to Arg22 is disordered. 11 helical membrane passes run Leu66 to Met88, Ala156 to Ile176, Leu186 to Thr208, Leu236 to Pro254, Phe260 to Asp279, Ile286 to Gly303, Thr309 to Met325, Val334 to Leu354, Val414 to Leu434, Gly449 to Met469, and Leu491 to Ala511.

It belongs to the dpy-19 family. Widely expressed.

The protein localises to the endoplasmic reticulum membrane. It carries out the reaction L-tryptophyl-[protein] + a di-trans,poly-cis-dolichyl beta-D-mannosyl phosphate = C-alpha-D-mannosyl-L-tryptophyl-[protein] + a di-trans,poly-cis-dolichyl phosphate + H(+). Its pathway is protein modification; protein glycosylation. Its function is as follows. C-mannosyltransferase that mediates the C-mannosylation tryptophan residues on target proteins. The reaction occurs on the luminal side of the endoplasmic reticulum and involves the transfer of a mannose unit from a dolichylphosphate mannose (Dol-P-Man) donor to an acceptor protein containing a WxxW consensus sequence. C-mannosylates the first two tryptophans in the WxxWxxWxxC motif in thrombospondin (TSP) type-1 of UNC5A. Regulates neurite extension during development. The chain is Protein C-mannosyl-transferase DPY19L1 (DPY19L1) from Homo sapiens (Human).